The following is a 186-amino-acid chain: Peptidyl-tRNA hydrolase (186 aa).

Residue tyrosine 14 participates in tRNA binding. Histidine 19 serves as the catalytic Proton acceptor. TRNA-binding residues include tyrosine 61, asparagine 63, and asparagine 107.

This sequence belongs to the PTH family. In terms of assembly, monomer.

It localises to the cytoplasm. It catalyses the reaction an N-acyl-L-alpha-aminoacyl-tRNA + H2O = an N-acyl-L-amino acid + a tRNA + H(+). Hydrolyzes ribosome-free peptidyl-tRNAs (with 1 or more amino acids incorporated), which drop off the ribosome during protein synthesis, or as a result of ribosome stalling. Its function is as follows. Catalyzes the release of premature peptidyl moieties from peptidyl-tRNA molecules trapped in stalled 50S ribosomal subunits, and thus maintains levels of free tRNAs and 50S ribosomes. In Helicobacter pylori (strain HPAG1), this protein is Peptidyl-tRNA hydrolase.